The sequence spans 111 residues: SPbeta prophage-derived uncharacterized protein YolC (111 aa).

The N-terminal stretch at 1–25 is a signal peptide; the sequence is MKKRLIGFLVLVPALIMSGITLIEA.

The chain is SPbeta prophage-derived uncharacterized protein YolC (yolC) from Bacillus subtilis (strain 168).